The chain runs to 158 residues: Transcription elongation factor GreA (158 aa).

Positions 47-68 (AEYDAAKEAQGLLEMRIAKLEE) form a coiled coil.

Belongs to the GreA/GreB family.

In terms of biological role, necessary for efficient RNA polymerase transcription elongation past template-encoded arresting sites. The arresting sites in DNA have the property of trapping a certain fraction of elongating RNA polymerases that pass through, resulting in locked ternary complexes. Cleavage of the nascent transcript by cleavage factors such as GreA or GreB allows the resumption of elongation from the new 3'terminus. GreA releases sequences of 2 to 3 nucleotides. The protein is Transcription elongation factor GreA of Flavobacterium johnsoniae (strain ATCC 17061 / DSM 2064 / JCM 8514 / BCRC 14874 / CCUG 350202 / NBRC 14942 / NCIMB 11054 / UW101) (Cytophaga johnsonae).